The chain runs to 186 residues: C-type lectin domain family 19 member A (186 aa).

A signal peptide spans 1 to 19; it reads MQRWTLWAAAFLTLHSAQA. In terms of domain architecture, C-type lectin spans 47-179; sequence FKGHCYRFFP…CSRKFPFVCK (133 aa). Asn-58 is a glycosylation site (N-linked (GlcNAc...) asparagine). 2 disulfides stabilise this stretch: Cys-68/Cys-178 and Cys-151/Cys-170.

It localises to the secreted. In Homo sapiens (Human), this protein is C-type lectin domain family 19 member A.